Reading from the N-terminus, the 132-residue chain is Small ribosomal subunit protein uS8 (132 aa).

Belongs to the universal ribosomal protein uS8 family. As to quaternary structure, part of the 30S ribosomal subunit. Contacts proteins S5 and S12.

Functionally, one of the primary rRNA binding proteins, it binds directly to 16S rRNA central domain where it helps coordinate assembly of the platform of the 30S subunit. The polypeptide is Small ribosomal subunit protein uS8 (Clostridium perfringens (strain ATCC 13124 / DSM 756 / JCM 1290 / NCIMB 6125 / NCTC 8237 / Type A)).